The primary structure comprises 516 residues: 2-isopropylmalate synthase (516 aa).

In terms of domain architecture, Pyruvate carboxyltransferase spans 5-267 (VIIFDTTLRD…STNIVHKEIY (263 aa)). Positions 14, 202, 204, and 238 each coordinate Mn(2+). A regulatory domain region spans residues 392-516 (YLKFFSVQSI…NKKLKNLKKY (125 aa)).

This sequence belongs to the alpha-IPM synthase/homocitrate synthase family. LeuA type 1 subfamily. As to quaternary structure, homodimer. Requires Mn(2+) as cofactor.

Its subcellular location is the cytoplasm. The enzyme catalyses 3-methyl-2-oxobutanoate + acetyl-CoA + H2O = (2S)-2-isopropylmalate + CoA + H(+). The protein operates within amino-acid biosynthesis; L-leucine biosynthesis; L-leucine from 3-methyl-2-oxobutanoate: step 1/4. Functionally, catalyzes the condensation of the acetyl group of acetyl-CoA with 3-methyl-2-oxobutanoate (2-ketoisovalerate) to form 3-carboxy-3-hydroxy-4-methylpentanoate (2-isopropylmalate). The chain is 2-isopropylmalate synthase from Buchnera aphidicola subsp. Diuraphis noxia.